We begin with the raw amino-acid sequence, 760 residues long: MSTVEEDSDTVTVETVNSVTFTQDTDGNLILHCPQNDPDEIDSEDSTEPPHKRLCLSSEDDQSIDDSTPCISVVALPLSENDQSFEVTMTATTEVADDELSEGTVTQIQILQNDQLDEMSPLGTEEVSAVSQAWFTTKEDKDSLTNKGHKWKQGMWSKEEIDILMNNIERYLKARGIKDATEIIFEMSKDERKDFYRTIAWGLNRPLFAVYRRVLRMYDDRNHVGKYTPEEIEKLKELRIKHGNDWATIGAALGRSASSVKDRCRLMKDTCNTGKWTEEEEKRLAEVVHELTSTEPGDIVTQGVSWAAVAERVGTRSEKQCRSKWLNYLNWKQSGGTEWTKEDEINLILRIAELDVADENDINWDLLAEGWSSVRSPQWLRSKWWTIKRQIANHKDVSFPVLIKGLKQLHENQKNNPVLLENKSGSGVPNSNCNSSVQHVQIRVARLEDNTAISPSPMAALQIPVQITHVSSTDSPAASVDSETITLNSGTLQTFEILPSFHLQPTGTPGTYLLQTSSSQGLPLTLTTSPTVTLAAAAPASPEQIIVHALSPEHLLNTSDNVTVQCHTPRVIIQTVATEDITSSISQAELTADSDLHSSDFPEPPDALEADTFPDEIPRPKMTIQPSFNNAHVSKYSDQNSTELMNSVMVRTEEEIADTDLKQEPPSDLASAYVTEDLESPTIVHQVHQTIDDETILIVPSPHGFIQASDGIDAESVLPLTTLTDPIFQHHQEESNIIGSSLGSPVSEDSKDVEDLVNCH.

Residues methionine 1–glutamate 237 are interaction with CCND2. Residues aspartate 24–serine 63 are disordered. The segment covering aspartate 37 to threonine 47 has biased composition (acidic residues). Residues valine 87 to arginine 170 are required for transcriptional activation. Residues valine 87–methionine 458 are required for DNA-binding. Residues glycine 176–threonine 690 form an interaction with CCND1, CCND2 and CCND3 region. A Myb-like 1 domain is found at glycine 225 to arginine 263. The HTH myb-type domain occupies lysine 268–glutamine 333. A DNA-binding region (H-T-H motif) is located at residues tryptophan 306–leucine 329. In terms of domain architecture, Myb-like 2 spans tryptophan 339–lysine 388. Residues alanine 459–histidine 760 form a required for transcriptional activation region. Disordered regions lie at residues aspartate 593–proline 614 and isoleucine 738–histidine 760.

This sequence belongs to the DMTF1 family. As to quaternary structure, interacts with the D-type cyclins CCND1, CCND2 and CCND3. Interaction with D-type cyclins may modulate transcriptional activation by this protein. In terms of processing, phosphorylated by the cyclin-D2/CDK4, cyclin-D3/CDK4 and cyclin-D2/CDK6 complexes and to a lesser extent by the cyclin-D1/CDK4 complex.

The protein resides in the nucleus. Its function is as follows. Transcriptional activator which activates the CDKN2A/ARF locus in response to Ras-Raf signaling, thereby promoting p53/TP53-dependent growth arrest. Binds to the consensus sequence 5'-CCCG[GT]ATGT-3'. This Rattus norvegicus (Rat) protein is Cyclin-D-binding Myb-like transcription factor 1 (Dmtf1).